The sequence spans 413 residues: Glucose-1-phosphate adenylyltransferase (413 aa).

Residues glycine 169, 184 to 185, and serine 201 contribute to the alpha-D-glucose 1-phosphate site; that span reads EK.

Belongs to the bacterial/plant glucose-1-phosphate adenylyltransferase family. Homotetramer.

The catalysed reaction is alpha-D-glucose 1-phosphate + ATP + H(+) = ADP-alpha-D-glucose + diphosphate. It participates in glycan biosynthesis; glycogen biosynthesis. Functionally, involved in the biosynthesis of ADP-glucose, a building block required for the elongation reactions to produce glycogen. Catalyzes the reaction between ATP and alpha-D-glucose 1-phosphate (G1P) to produce pyrophosphate and ADP-Glc. This is Glucose-1-phosphate adenylyltransferase from Trichlorobacter lovleyi (strain ATCC BAA-1151 / DSM 17278 / SZ) (Geobacter lovleyi).